The sequence spans 142 residues: Hemoglobin subunit alpha (142 aa).

Residue serine 1 is modified to N-acetylserine. A Globin domain is found at 1–142 (SLSEKNKAAV…VALALADRYR (142 aa)). Residue histidine 59 coordinates O2. Histidine 88 serves as a coordination point for heme b.

The protein belongs to the globin family. In terms of assembly, heterotetramer of two alpha chains and two beta chains. In terms of tissue distribution, red blood cells.

Functionally, involved in oxygen transport from gills to the various peripheral tissues. The protein is Hemoglobin subunit alpha (hba) of Pagothenia borchgrevinki (Bald rockcod).